The sequence spans 86 residues: uncharacterized protein (86 aa).

The protein to M.jannaschii MJ0526.1.

This is an uncharacterized protein from Methanothermobacter thermautotrophicus (strain ATCC 29096 / DSM 1053 / JCM 10044 / NBRC 100330 / Delta H) (Methanobacterium thermoautotrophicum).